Consider the following 271-residue polypeptide: 5-deoxy-glucuronate isomerase (271 aa).

Belongs to the isomerase IolB family.

It carries out the reaction 5-deoxy-D-glucuronate = 5-dehydro-2-deoxy-D-gluconate. The protein operates within polyol metabolism; myo-inositol degradation into acetyl-CoA; acetyl-CoA from myo-inositol: step 4/7. Involved in the isomerization of 5-deoxy-glucuronate (5DG) to 5-dehydro-2-deoxy-D-gluconate (DKG or 2-deoxy-5-keto-D-gluconate). This chain is 5-deoxy-glucuronate isomerase, found in Bacillus subtilis subsp. natto.